The chain runs to 300 residues: Inosose dehydratase (300 aa).

It belongs to the IolE/MocC family. Glutathione serves as cofactor. Requires Co(2+) as cofactor. Mn(2+) is required as a cofactor.

It catalyses the reaction scyllo-inosose = 3D-3,5/4-trihydroxycyclohexane-1,2-dione + H2O. Functionally, catalyzes the dehydration of inosose (2-keto-myo-inositol, 2KMI or 2,4,6/3,5-pentahydroxycyclohexanone) to 3D-(3,5/4)-trihydroxycyclohexane-1,2-dione (D-2,3-diketo-4-deoxy-epi-inositol). The polypeptide is Inosose dehydratase (Mesomycoplasma hyopneumoniae (strain J / ATCC 25934 / NCTC 10110) (Mycoplasma hyopneumoniae)).